A 301-amino-acid polypeptide reads, in one-letter code: Probable alpha-L-glutamate ligase (301 aa).

The ATP-grasp domain occupies M104–E287. ATP is bound by residues K141, E178–F179, D187, and R211–N213. The Mg(2+) site is built by D248, E260, and N262. The Mn(2+) site is built by D248, E260, and N262.

Belongs to the RimK family. Mg(2+) serves as cofactor. The cofactor is Mn(2+).

This is Probable alpha-L-glutamate ligase from Aliivibrio salmonicida (strain LFI1238) (Vibrio salmonicida (strain LFI1238)).